We begin with the raw amino-acid sequence, 337 residues long: Nicotinate-nucleotide--dimethylbenzimidazole phosphoribosyltransferase (337 aa).

Residue E305 is the Proton acceptor of the active site.

This sequence belongs to the CobT family.

It carries out the reaction 5,6-dimethylbenzimidazole + nicotinate beta-D-ribonucleotide = alpha-ribazole 5'-phosphate + nicotinate + H(+). The protein operates within nucleoside biosynthesis; alpha-ribazole biosynthesis; alpha-ribazole from 5,6-dimethylbenzimidazole: step 1/2. In terms of biological role, catalyzes the synthesis of alpha-ribazole-5'-phosphate from nicotinate mononucleotide (NAMN) and 5,6-dimethylbenzimidazole (DMB). The chain is Nicotinate-nucleotide--dimethylbenzimidazole phosphoribosyltransferase from Roseobacter denitrificans (strain ATCC 33942 / OCh 114) (Erythrobacter sp. (strain OCh 114)).